A 563-amino-acid polypeptide reads, in one-letter code: MQWTQAYTPIGGNLLLSALAALVPIIFFFWALAIKRMKGYTAGLATLGIALIIAVLVYRMPAEKALMSATQGAVYGLLPIGWIIVTSVFLYKITVKTGQFDIIRSSVLSITDDRRLQALLIAFSFGAFLEGAAGFGAPVAISAALLVGLGFNPLYAAGICLIANTAPVAFGAIGIPITAVEGPTGIPAMEISQMVGRQLPFLSVFIPLYLIIIMSGFRKALEIWPAILVSGVSFAVVQYLSSNFLGPELPDVLSALVSMAALAVFLKWWKPKTTFRFAGEQESAASIETARTNPAAPAYRGGQIFKAWSPFLLLTAMISVWGIPSVKSALTGHYEGSAVFLKWLNAVGEKLTFSPGVPFLNNQIVNADGTPIEAVYKLEVLGSAGTAILIAAVLSKFITAISWKDWGTVFKETVQELKLPILTIASVVGFAYVTNSSGMSTTLGMTLALTGSMFTFFSPVLGWLGVFITGSDTSANLLFGNLQKVTALSVGMDPVLSVAANSSGGVTGKMISPQSIAVACAAVGLAGKESDLFRFTIKHSLFLLLLVCIITFLQHHVFSWMIP.

The next 14 membrane-spanning stretches (helical) occupy residues 14 to 34 (LLLSALAALVPIIFFFWALAI), 37 to 57 (MKGYTAGLATLGIALIIAVLV), 73 to 93 (AVYGLLPIGWIIVTSVFLYKI), 131 to 151 (GAAGFGAPVAISAALLVGLGF), 157 to 177 (AGICLIANTAPVAFGAIGIPI), 194 to 214 (MVGRQLPFLSVFIPLYLIIIM), 220 to 240 (ALEIWPAILVSGVSFAVVQYL), 249 to 269 (LPDVLSALVSMAALAVFLKWW), 304 to 324 (IFKAWSPFLLLTAMISVWGIP), 381 to 401 (LGSAGTAILIAAVLSKFITAI), 419 to 439 (LPILTIASVVGFAYVTNSSGM), 448 to 468 (ALTGSMFTFFSPVLGWLGVFI), 506 to 526 (VTGKMISPQSIAVACAAVGLA), and 542 to 562 (FLLLLVCIITFLQHHVFSWMI).

Belongs to the lactate permease family.

It localises to the cell membrane. In terms of biological role, is the principal permease for the uptake of L-lactate in B.subtilis. The chain is L-lactate permease (lutP) from Bacillus subtilis (strain 168).